The primary structure comprises 424 residues: Ubiquitin carboxyl-terminal hydrolase 12/46 homolog (424 aa).

Residues 24–421 enclose the USP domain; sequence FGLVNFGNTC…TGYILFYQSR (398 aa). Cysteine 33 (nucleophile) is an active-site residue. The tract at residues 131–189 is disordered; it reads NAGPSNGNPKATNQGGSTSAMASSIASKSSSTSNSNSNSNSTTNSNGNSSNSTGSLNAN. The span at 133–144 shows a compositional bias: polar residues; the sequence is GPSNGNPKATNQ. Low complexity predominate over residues 145–189; sequence GGSTSAMASSIASKSSSTSNSNSNSNSTTNSNGNSSNSTGSLNAN. The active-site Proton acceptor is the histidine 369.

Belongs to the peptidase C19 family. Catalytic component of the Usp12-46 deubiquitylase complex consisting of Usp12-46, Wdr20 and Uaf1. The Usp12-46 deubiquitylase complex associates with arr/arrow; the interaction leads to deubiquitination and stabilization of arr/arrow.

The catalysed reaction is Thiol-dependent hydrolysis of ester, thioester, amide, peptide and isopeptide bonds formed by the C-terminal Gly of ubiquitin (a 76-residue protein attached to proteins as an intracellular targeting signal).. In terms of biological role, catalytic component of the Usp12-46 deubiquitylase complex. Deubiquitylates the wg/wingless-signaling receptor arr/arrow, which stabilizes the receptor and increases its concentration at the cell surface; this enhances the sensitivity of cells to wg/wingless-signal stimulation. This increases the amplitude and spatial range of the signaling response to the wg/wingless morphogen gradient, facilitating the precise, concentration-dependent regulation of its target genes. Required for wg/wingless-mediated signaling in the wing imaginal disc and for wg/wingless-dependent regulation of adult intestinal stem cell proliferation. Negative regulator of Notch signaling, possibly by regulating lysosomal degradation of N/Notch and affecting cell surface receptor levels; this may be context and cell-type specific function involved in external sensory organ development but not in wing imaginal-disc dorsoventral boundary signaling. Protects against HTT/huntingtin-induced polyglutamine expansion-dependent neurodegeneration. The sequence is that of Ubiquitin carboxyl-terminal hydrolase 12/46 homolog from Drosophila melanogaster (Fruit fly).